Reading from the N-terminus, the 282-residue chain is uncharacterized protein (282 aa).

Residues 1 to 77 (MNGLLRIRQR…LALSEALASQ (77 aa)) enclose the HTH rpiR-type domain. A DNA-binding region (H-T-H motif) is located at residues 37–56 (SQQLANEAGVSQSSVVKFAQ). An SIS domain is found at 125-265 (CVTMLRSARR…FIALIQQDLE (141 aa)).

This is an uncharacterized protein from Escherichia coli (strain K12).